Consider the following 142-residue polypeptide: Transcriptional regulator MraZ (142 aa).

2 consecutive SpoVT-AbrB domains span residues glutamate 5–glutamate 47 and alanine 76–lysine 119.

The protein belongs to the MraZ family. Forms oligomers.

Its subcellular location is the cytoplasm. The protein resides in the nucleoid. The polypeptide is Transcriptional regulator MraZ (Clostridium botulinum (strain Eklund 17B / Type B)).